Reading from the N-terminus, the 216-residue chain is Large ribosomal subunit protein uL1 (216 aa).

The protein belongs to the universal ribosomal protein uL1 family. In terms of assembly, component of the large ribosomal subunit.

Its subcellular location is the cytoplasm. Its function is as follows. Component of the large ribosomal subunit. The ribosome is a large ribonucleoprotein complex responsible for the synthesis of proteins in the cell. The protein is Large ribosomal subunit protein uL1 (rpl10a) of Ictalurus punctatus (Channel catfish).